The primary structure comprises 177 residues: Adenine phosphoribosyltransferase (177 aa).

It belongs to the purine/pyrimidine phosphoribosyltransferase family. In terms of assembly, homodimer.

It localises to the cytoplasm. The catalysed reaction is AMP + diphosphate = 5-phospho-alpha-D-ribose 1-diphosphate + adenine. Its pathway is purine metabolism; AMP biosynthesis via salvage pathway; AMP from adenine: step 1/1. Functionally, catalyzes a salvage reaction resulting in the formation of AMP, that is energically less costly than de novo synthesis. The protein is Adenine phosphoribosyltransferase of Mycobacteroides abscessus (strain ATCC 19977 / DSM 44196 / CCUG 20993 / CIP 104536 / JCM 13569 / NCTC 13031 / TMC 1543 / L948) (Mycobacterium abscessus).